We begin with the raw amino-acid sequence, 86 residues long: YcgL domain-containing protein IL1825 (86 aa).

Residues 1–85 (MLCDVYRSSK…KREELQVNVN (85 aa)) form the YcgL domain.

This chain is YcgL domain-containing protein IL1825, found in Idiomarina loihiensis (strain ATCC BAA-735 / DSM 15497 / L2-TR).